The following is a 644-amino-acid chain: MEEVDNIIIHTLRQIGCEIPEEIQSLREFTTTVIVQASSKCLHVINEDIDIPSNLPSSMSAKFRVGTMLAAALQDLGYRGEIGYQTFLYSNEKDIRSVFMFLVEHLPKETSLAASEPLGSSVLLNRRVASDLAQRLTLSWTPTFLKKGGVRWKGSKPKTYFREGSASMRRFHACNLKSPQGLTDLTAKISKETKAYYSVIPYVTSQPPCRQDVVPSVLESNSLSVTAVAEWELEWNQSGLSSRLTKEEYLARKRQRLEKKIKDHVLAEMQRVEAGGRAASDLSDIVSSFSDRVSTIESQTQGSRFTRTEKLQFAQDEQKAAAMAGLSESGPPKMDTEEELQKKREQELEALQNKLKDLASSVDEKKSEIKTMNAGLQQTNEQVTATKVQNSEHEESYKVKKRTVDLLPDAENNIAKLQGVVDSSSQRLVNLAQQWETHRTALIDEYRELKVINANKVSETQKKLEEIKSLREKMKEVAEETRGKDDLYKQLVSEYERMSRDVNRSAYTRRILEIVGNIKKQKEEINKILVDTKSVQKEINQLSGKLDRTFTVTDELIFRDAKKDEACRKAYKYLASLHENCKELIQAVEDTGVIMREIRDLEEQIDTESQRNTANNLERITADHKQMKEENATLTKKIKALKSS.

Residues 316–341 (DEQKAAAMAGLSESGPPKMDTEEELQ) are disordered. Coiled coils occupy residues 333 to 383 (KMDT…NEQV), 409 to 486 (DAEN…GKDD), and 592 to 644 (GVIM…LKSS).

It belongs to the CCDC22 family.

This is Coiled-coil domain-containing protein 22 homolog from Nematostella vectensis (Starlet sea anemone).